The primary structure comprises 165 residues: UPF0303 protein Bphyt_1734 (165 aa).

It belongs to the UPF0303 family.

The polypeptide is UPF0303 protein Bphyt_1734 (Paraburkholderia phytofirmans (strain DSM 17436 / LMG 22146 / PsJN) (Burkholderia phytofirmans)).